A 478-amino-acid polypeptide reads, in one-letter code: V-type proton ATPase subunit H (478 aa).

The protein belongs to the V-ATPase H subunit family. In terms of assembly, V-ATPase is a heteromultimeric enzyme composed of a peripheral catalytic V1 complex (components A to H) attached to an integral membrane V0 proton pore complex (components: a, c, c', c'', d, e, f and VOA1). Interacts with YND1.

It localises to the vacuole membrane. In terms of biological role, subunit of the V1 complex of vacuolar(H+)-ATPase (V-ATPase), a multisubunit enzyme composed of a peripheral complex (V1) that hydrolyzes ATP and a membrane integral complex (V0) that translocates protons. V-ATPase is responsible for acidifying and maintaining the pH of intracellular compartments. This subunit is essential for activity, but not assembly, of the enzyme complex. This subunit is also required for silencing the ATPase activity of V-ATPase when V1 is detached from V0. The protein is V-type proton ATPase subunit H of Saccharomyces cerevisiae (strain ATCC 204508 / S288c) (Baker's yeast).